The sequence spans 236 residues: 7-cyano-7-deazaguanine synthase (236 aa).

Cys-7–Ala-17 is an ATP binding site. 4 residues coordinate Zn(2+): Cys-185, Cys-193, Cys-196, and Cys-199.

This sequence belongs to the QueC family. Zn(2+) serves as cofactor.

The catalysed reaction is 7-carboxy-7-deazaguanine + NH4(+) + ATP = 7-cyano-7-deazaguanine + ADP + phosphate + H2O + H(+). It participates in purine metabolism; 7-cyano-7-deazaguanine biosynthesis. Catalyzes the ATP-dependent conversion of 7-carboxy-7-deazaguanine (CDG) to 7-cyano-7-deazaguanine (preQ(0)). This chain is 7-cyano-7-deazaguanine synthase, found in Agrobacterium fabrum (strain C58 / ATCC 33970) (Agrobacterium tumefaciens (strain C58)).